A 159-amino-acid chain; its full sequence is Small ribosomal subunit protein bS16 (159 aa).

Residues 102–119 (GIPEAAEEAPATESVAEA) are compositionally biased toward low complexity. Positions 102–159 (GIPEAAEEAPATESVAEAEVADVPESELSEAATETAAAELSPPEAEVEKPQVEEAVEA) are disordered. Over residues 120 to 129 (EVADVPESEL) the composition is skewed to acidic residues. The segment covering 130–145 (SEAATETAAAELSPPE) has biased composition (low complexity).

Belongs to the bacterial ribosomal protein bS16 family.

This chain is Small ribosomal subunit protein bS16, found in Synechococcus sp. (strain JA-2-3B'a(2-13)) (Cyanobacteria bacterium Yellowstone B-Prime).